The chain runs to 353 residues: Dihydroorotate dehydrogenase (quinone) (353 aa).

Residues 66-70 (AGFDK) and Thr90 each bind FMN. Residue Lys70 participates in substrate binding. Substrate is bound at residue 115 to 119 (NRMGF). FMN contacts are provided by Asn143 and Asn176. A substrate-binding site is contributed by Asn176. The Nucleophile role is filled by Ser179. Position 181 (Asn181) interacts with substrate. Lys212 and Thr240 together coordinate FMN. Position 241–242 (241–242 (NT)) interacts with substrate. FMN-binding positions include Gly264, Gly293, and 314-315 (YT).

The protein belongs to the dihydroorotate dehydrogenase family. Type 2 subfamily. Monomer. It depends on FMN as a cofactor.

It is found in the cell membrane. It catalyses the reaction (S)-dihydroorotate + a quinone = orotate + a quinol. Its pathway is pyrimidine metabolism; UMP biosynthesis via de novo pathway; orotate from (S)-dihydroorotate (quinone route): step 1/1. Catalyzes the conversion of dihydroorotate to orotate with quinone as electron acceptor. This chain is Dihydroorotate dehydrogenase (quinone), found in Mycolicibacterium vanbaalenii (strain DSM 7251 / JCM 13017 / BCRC 16820 / KCTC 9966 / NRRL B-24157 / PYR-1) (Mycobacterium vanbaalenii).